The chain runs to 321 residues: Probable arabinan endo-1,5-alpha-L-arabinosidase A (321 aa).

The first 19 residues, 1–19, serve as a signal peptide directing secretion; that stretch reads MSASVFVVVASCLAALAHG. The active-site Proton acceptor is the Asp-34. The active-site Proton donor is the Glu-200.

Belongs to the glycosyl hydrolase 43 family.

The protein localises to the secreted. It carries out the reaction Endohydrolysis of (1-&gt;5)-alpha-arabinofuranosidic linkages in (1-&gt;5)-arabinans.. Its pathway is glycan metabolism; L-arabinan degradation. Endo-1,5-alpha-L-arabinanase involved in degradation of pectin. Its preferred substrate is linear 1,5-alpha-L-arabinan. This Aspergillus fumigatus (strain ATCC MYA-4609 / CBS 101355 / FGSC A1100 / Af293) (Neosartorya fumigata) protein is Probable arabinan endo-1,5-alpha-L-arabinosidase A (abnA).